The chain runs to 404 residues: Cysteine desulfurase IscS (404 aa).

Pyridoxal 5'-phosphate contacts are provided by residues 75-76 (AT), Asn-155, Gln-183, and 203-205 (SAH). At Lys-206 the chain carries N6-(pyridoxal phosphate)lysine. Thr-243 is a pyridoxal 5'-phosphate binding site. The active-site Cysteine persulfide intermediate is Cys-328. Cys-328 provides a ligand contact to [2Fe-2S] cluster.

It belongs to the class-V pyridoxal-phosphate-dependent aminotransferase family. NifS/IscS subfamily. As to quaternary structure, homodimer. Forms a heterotetramer with IscU, interacts with other sulfur acceptors. Pyridoxal 5'-phosphate serves as cofactor.

The protein localises to the cytoplasm. It catalyses the reaction (sulfur carrier)-H + L-cysteine = (sulfur carrier)-SH + L-alanine. It functions in the pathway cofactor biosynthesis; iron-sulfur cluster biosynthesis. Functionally, master enzyme that delivers sulfur to a number of partners involved in Fe-S cluster assembly, tRNA modification or cofactor biosynthesis. Catalyzes the removal of elemental sulfur atoms from cysteine to produce alanine. Functions as a sulfur delivery protein for Fe-S cluster synthesis onto IscU, an Fe-S scaffold assembly protein, as well as other S acceptor proteins. The sequence is that of Cysteine desulfurase IscS from Ectopseudomonas mendocina (strain ymp) (Pseudomonas mendocina).